A 513-amino-acid polypeptide reads, in one-letter code: ATP synthase subunit alpha (513 aa).

An ATP-binding site is contributed by 169 to 176 (GDRQTGKT).

This sequence belongs to the ATPase alpha/beta chains family. As to quaternary structure, F-type ATPases have 2 components, CF(1) - the catalytic core - and CF(0) - the membrane proton channel. CF(1) has five subunits: alpha(3), beta(3), gamma(1), delta(1), epsilon(1). CF(0) has three main subunits: a(1), b(2) and c(9-12). The alpha and beta chains form an alternating ring which encloses part of the gamma chain. CF(1) is attached to CF(0) by a central stalk formed by the gamma and epsilon chains, while a peripheral stalk is formed by the delta and b chains.

Its subcellular location is the cell inner membrane. The catalysed reaction is ATP + H2O + 4 H(+)(in) = ADP + phosphate + 5 H(+)(out). Produces ATP from ADP in the presence of a proton gradient across the membrane. The alpha chain is a regulatory subunit. This Escherichia coli O81 (strain ED1a) protein is ATP synthase subunit alpha.